The following is a 251-amino-acid chain: Triosephosphate isomerase (251 aa).

9-11 serves as a coordination point for substrate; that stretch reads NWK. His94 functions as the Electrophile in the catalytic mechanism. Glu166 functions as the Proton acceptor in the catalytic mechanism. Substrate-binding positions include Gly172, Ser211, and 232–233; that span reads GG.

Belongs to the triosephosphate isomerase family. As to quaternary structure, homodimer.

The protein localises to the cytoplasm. It carries out the reaction D-glyceraldehyde 3-phosphate = dihydroxyacetone phosphate. It participates in carbohydrate biosynthesis; gluconeogenesis. It functions in the pathway carbohydrate degradation; glycolysis; D-glyceraldehyde 3-phosphate from glycerone phosphate: step 1/1. Its function is as follows. Involved in the gluconeogenesis. Catalyzes stereospecifically the conversion of dihydroxyacetone phosphate (DHAP) to D-glyceraldehyde-3-phosphate (G3P). This chain is Triosephosphate isomerase, found in Stenotrophomonas maltophilia (strain K279a).